Consider the following 116-residue polypeptide: Large ribosomal subunit protein eL30 (116 aa).

It belongs to the eukaryotic ribosomal protein eL30 family. As to quaternary structure, component of the large ribosomal subunit.

Its subcellular location is the cytoplasm. Component of the large ribosomal subunit. The ribosome is a large ribonucleoprotein complex responsible for the synthesis of proteins in the cell. The polypeptide is Large ribosomal subunit protein eL30 (rpl30) (Ictalurus punctatus (Channel catfish)).